Here is a 152-residue protein sequence, read N- to C-terminus: MMKKIDVKILDPRIGKDFPLPTYATPGSAGLDLRACLDSAVELAPGETQLLPTGLAIHIADTDLAAVILPRSGLGHKHGVVLGNLVGLIDSDYQGQLMVSVWNRGQKSFTIEPGERIAQMVFVPVVQAEFNLVEEFDSSERGAGGFGHSGRH.

Substrate contacts are provided by residues 71–73, Asn-84, 88–90, and Met-98; these read RSG and LID.

It belongs to the dUTPase family. Requires Mg(2+) as cofactor.

It catalyses the reaction dUTP + H2O = dUMP + diphosphate + H(+). Its pathway is pyrimidine metabolism; dUMP biosynthesis; dUMP from dCTP (dUTP route): step 2/2. In terms of biological role, this enzyme is involved in nucleotide metabolism: it produces dUMP, the immediate precursor of thymidine nucleotides and it decreases the intracellular concentration of dUTP so that uracil cannot be incorporated into DNA. The protein is Deoxyuridine 5'-triphosphate nucleotidohydrolase of Serratia proteamaculans (strain 568).